Consider the following 213-residue polypeptide: Phosphatidylethanolamine N-methyltransferase A (213 aa).

The Lumenal portion of the chain corresponds to 1–21; the sequence is MIVEHAIDYIDYLMNYVDFTE. The segment at residues 22–42 is an intramembrane region (helical); sequence KYFLLTIACVVFNPTWWNITA. Over 43–54 the chain is Lumenal; it reads RMEYKTKFMTKI. A helical transmembrane segment spans residues 55 to 75; that stretch reads CGSKENGCYLLAFLIFSLGIL. Residues 76–102 lie on the Cytoplasmic side of the membrane; that stretch reads RDWLFSEALIRQPIFQEFDRFEVEVLS. The chain crosses the membrane as a helical span at residues 103–123; sequence YILYGFGGILVLAAYLKLGIT. An S-adenosyl-L-methionine-binding site is contributed by 107–109; sequence GFG. The Lumenal segment spans residues 124–166; the sequence is GTYLGDYFGILMKERVTGFPFNVMNNPMYNGSVMLFIAHALSY. A helical membrane pass occupies residues 167 to 187; the sequence is KSVAGLVLSFVVYVVYKFALI. The Cytoplasmic segment spans residues 188–213; sequence FEESFTNYIYSTAAANAAKKNKSKSK. 189–190 is a binding site for S-adenosyl-L-methionine; it reads EE.

It belongs to the class VI-like SAM-binding methyltransferase superfamily. PEMT/PEM2 methyltransferase family.

It is found in the endoplasmic reticulum membrane. Its subcellular location is the mitochondrion membrane. The enzyme catalyses a 1,2-diacyl-sn-glycero-3-phospho-N-methylethanolamine + S-adenosyl-L-methionine = a 1,2-diacyl-sn-glycero-3-phospho-N,N-dimethylethanolamine + S-adenosyl-L-homocysteine + H(+). It catalyses the reaction a 1,2-diacyl-sn-glycero-3-phospho-N,N-dimethylethanolamine + S-adenosyl-L-methionine = a 1,2-diacyl-sn-glycero-3-phosphocholine + S-adenosyl-L-homocysteine + H(+). The catalysed reaction is a 1,2-diacyl-sn-glycero-3-phosphoethanolamine + S-adenosyl-L-methionine = a 1,2-diacyl-sn-glycero-3-phospho-N-methylethanolamine + S-adenosyl-L-homocysteine + H(+). It functions in the pathway phospholipid metabolism; phosphatidylcholine biosynthesis. Functionally, catalyzes the three sequential steps of the methylation pathway of phosphatidylcholine biosynthesis, the SAM-dependent methylation of phosphatidylethanolamine (PE) to phosphatidylmonomethylethanolamine (PMME), PMME to phosphatidyldimethylethanolamine (PDME), and PDME to phosphatidylcholine (PC). This Dictyostelium discoideum (Social amoeba) protein is Phosphatidylethanolamine N-methyltransferase A (pemtA).